Consider the following 456-residue polypeptide: Gamma-aminobutyric acid receptor subunit alpha-1 (456 aa).

An N-terminal signal peptide occupies residues 1 to 27 (MRKSPGLSDCLWAWILLLSTLTGRSYG). Over 28-253 (QPSLQDELKD…FHLKRKIGYF (226 aa)) the chain is Extracellular. Residue asparagine 38 is glycosylated (N-linked (GlcNAc...) asparagine). Arginine 94 contributes to the 4-aminobutanoate binding site. Residue asparagine 138 is glycosylated (N-linked (GlcNAc...) asparagine). Threonine 157 provides a ligand contact to 4-aminobutanoate. A disulfide bond links cysteine 166 and cysteine 180. A helical membrane pass occupies residues 254–274 (VIQTYLPCIMTVILSQVSFWL). Topologically, residues 275 to 279 (NRESV) are cytoplasmic. The helical transmembrane segment at 280 to 301 (PARTVFGVTTVLTMTTLSISAR) threads the bilayer. Over 302–311 (NSLPKVAYAT) the chain is Extracellular. A helical membrane pass occupies residues 312–333 (AMDWFIAVCYAFVFSALIEFAT). At 334 to 421 (VNYFTKRGYA…TFNSVSKIDR (88 aa)) the chain is on the cytoplasmic side. A helical transmembrane segment spans residues 422 to 441 (LSRIAFPLLFGIFNLIYWAT). At 442–456 (YLNREPQLKAPTPHQ) the chain is on the extracellular side.

This sequence belongs to the ligand-gated ion channel (TC 1.A.9) family. Gamma-aminobutyric acid receptor (TC 1.A.9.5) subfamily. GABRA1 sub-subfamily. As to quaternary structure, heteropentamer, formed by a combination of alpha (GABRA1-6), beta (GABRB1-3), gamma (GABRG1-3), delta (GABRD), epsilon (GABRE), rho (GABRR1-3), pi (GABRP) and theta (GABRQ) subunits, each subunit exhibiting distinct physiological and pharmacological properties. Interacts with UBQLN1. Interacts with TRAK1. Interacts with KIF21B. Identified in a complex of 720 kDa composed of LHFPL4, NLGN2, GABRA1, GABRB2, GABRG2 and GABRB3. Interacts with LHFPL4. Interacts with NLGN2. Interacts with SHISA7; interaction leads to the regulation of GABA(A) receptor trafficking, channel deactivation kinetics and pharmacology.

It is found in the postsynaptic cell membrane. The protein resides in the cell membrane. The protein localises to the cytoplasmic vesicle membrane. The enzyme catalyses chloride(in) = chloride(out). Its activity is regulated as follows. Allosterically activated by benzodiazepines, the neuroanesthetic alphaxalone and pentobarbital. Inhibited by the antagonist bicuculline. Potentiated by histamine. In terms of biological role, alpha subunit of the heteropentameric ligand-gated chloride channel gated by gamma-aminobutyric acid (GABA), a major inhibitory neurotransmitter in the brain. GABA-gated chloride channels, also named GABA(A) receptors (GABAAR), consist of five subunits arranged around a central pore and contain GABA active binding site(s) located at the alpha and beta subunit interface(s). When activated by GABA, GABAARs selectively allow the flow of chloride anions across the cell membrane down their electrochemical gradient. Alpha-1/GABRA1-containing GABAARs are largely synaptic. Chloride influx into the postsynaptic neuron following GABAAR opening decreases the neuron ability to generate a new action potential, thereby reducing nerve transmission. GABAARs containing alpha-1 and beta-2 or -3 subunits exhibit synaptogenic activity; the gamma-2 subunit being necessary but not sufficient to induce rapid synaptic contacts formation. GABAARs function also as histamine receptor where histamine binds at the interface of two neighboring beta subunits and potentiates GABA response. GABAARs containing alpha, beta and epsilon subunits also permit spontaneous chloride channel activity while preserving the structural information required for GABA-gated openings. Alpha-1-mediated plasticity in the orbitofrontal cortex regulates context-dependent action selection. Together with rho subunits, may also control neuronal and glial GABAergic transmission in the cerebellum. This Pongo abelii (Sumatran orangutan) protein is Gamma-aminobutyric acid receptor subunit alpha-1 (GABRA1).